The sequence spans 240 residues: Glutathione S-transferase theta-1 (240 aa).

One can recognise a GST N-terminal domain in the interval 2–82; it reads GLELYLDLLS…YLARKYKVPD (81 aa). Residues histidine 40, 53-54, and 66-67 each bind glutathione; these read KV and ES. The GST C-terminal domain occupies 88–226; it reads DLQACARVDE…AKDSQPADPT (139 aa).

This sequence belongs to the GST superfamily. Theta family. As to quaternary structure, homodimer.

It is found in the cytoplasm. The enzyme catalyses RX + glutathione = an S-substituted glutathione + a halide anion + H(+). Functionally, conjugation of reduced glutathione to a wide number of exogenous and endogenous hydrophobic electrophiles. Also binds steroids, bilirubin, carcinogens and numerous organic anions. Has dichloromethane dehalogenase activity. This is Glutathione S-transferase theta-1 (GSTT1) from Bos taurus (Bovine).